We begin with the raw amino-acid sequence, 269 residues long: Microtubule-associated protein RP/EB family member 1 (269 aa).

The Calponin-homology (CH) domain occupies 14–116 (NLSRHDMLAW…FVQWFKKFFD (103 aa)). The interval 168-190 (RTAVSNKPPAQGISKKPATVGNG) is disordered. In terms of domain architecture, EB1 C-terminal spans 186 to 256 (TVGNGDDESA…LYATDEGFVI (71 aa)).

The protein belongs to the MAPRE family.

Its subcellular location is the cytoplasm. The protein resides in the cytoskeleton. It localises to the microtubule organizing center. It is found in the centrosome. The protein localises to the golgi apparatus. Its subcellular location is the spindle. The protein resides in the spindle pole. In terms of biological role, plus-end tracking protein (+TIP) that binds to the plus-end of microtubules and regulates the dynamics of the microtubule cytoskeleton. Promotes cytoplasmic microtubule nucleation and elongation. Involved in mitotic spindle positioning by stabilizing microtubules and promoting dynamic connection between astral microtubules and the cortex during mitotic chromosome segregation. The protein is Microtubule-associated protein RP/EB family member 1 (mapre1) of Xenopus tropicalis (Western clawed frog).